The chain runs to 733 residues: Catalase-peroxidase (733 aa).

The disordered stretch occupies residues Met-1–Tyr-24. Positions Trp-96–Tyr-219 form a cross-link, tryptophyl-tyrosyl-methioninium (Trp-Tyr) (with M-245). His-97 serves as the catalytic Proton acceptor. Positions Tyr-219–Met-245 form a cross-link, tryptophyl-tyrosyl-methioninium (Tyr-Met) (with W-96). Residue His-260 coordinates heme b.

The protein belongs to the peroxidase family. Peroxidase/catalase subfamily. In terms of assembly, homodimer or homotetramer. Requires heme b as cofactor. Post-translationally, formation of the three residue Trp-Tyr-Met cross-link is important for the catalase, but not the peroxidase activity of the enzyme.

It carries out the reaction H2O2 + AH2 = A + 2 H2O. The catalysed reaction is 2 H2O2 = O2 + 2 H2O. Its function is as follows. Bifunctional enzyme with both catalase and broad-spectrum peroxidase activity. The chain is Catalase-peroxidase from Methanoregula boonei (strain DSM 21154 / JCM 14090 / 6A8).